Consider the following 285-residue polypeptide: Sulfotransferase 2A2 (285 aa).

Residues K44, S45, G46, T47, N48, and W49 each coordinate 3'-phosphoadenylyl sulfate. Residue H99 is the Proton acceptor of the active site. Residues R121, S129, Y184, S218, M223, R247, K248, and G249 each coordinate 3'-phosphoadenylyl sulfate.

Belongs to the sulfotransferase 1 family.

It localises to the cytoplasm. The enzyme catalyses an alcohol + 3'-phosphoadenylyl sulfate = an alkyl sulfate + adenosine 3',5'-bisphosphate + H(+). Sulfotransferase that utilizes 3'-phospho-5'-adenylyl sulfate (PAPS) as sulfonate donor to catalyze the sulfate conjugation of a potential wide variety of acceptor molecules bearing a hydroxyl group. Sulfonation increases the water solubility of most compounds, and therefore their renal excretion, but it can also result in bioactivation to form active metabolites. The protein is Sulfotransferase 2A2 of Mus musculus (Mouse).